Reading from the N-terminus, the 436-residue chain is Voltage-gated potassium channel regulatory subunit KCNG3 (436 aa).

The Cytoplasmic segment spans residues methionine 1–leucine 168. Residues alanine 169 to alanine 190 traverse the membrane as a helical segment. At serine 191 to proline 220 the chain is on the extracellular side. Residues serine 221–valine 242 form a helical membrane-spanning segment. At serine 243 to proline 253 the chain is on the cytoplasmic side. The chain crosses the membrane as a helical span at residues leucine 254–phenylalanine 274. Topologically, residues threonine 275–alanine 284 are extracellular. A helical; Voltage-sensor membrane pass occupies residues glycine 285–histidine 305. Over phenylalanine 306–tyrosine 320 the chain is Cytoplasmic. A helical membrane pass occupies residues arginine 321–glutamine 342. Topologically, residues leucine 343–isoleucine 360 are extracellular. The helical intramembrane region spans proline 361–threonine 372. Residues threonine 373–aspartate 378 carry the Selectivity filter motif. Residues threonine 373 to tyrosine 380 lie within the membrane without spanning it. Residues proline 381–arginine 387 are Extracellular-facing. Residues isoleucine 388–tyrosine 416 traverse the membrane as a helical segment. Topologically, residues histidine 417–asparagine 436 are cytoplasmic.

The protein belongs to the potassium channel family. G (TC 1.A.1.2) subfamily. Kv6.3/KCNG3 sub-subfamily. In terms of assembly, heterotetramer with KCNB1. Does not form homomultimers. Expressed in the brain, liver, testis, small intestine, colon, thymus and adrenal gland.

It is found in the cell membrane. It localises to the cytoplasm. Regulatory subunit of the voltage-gated potassium (Kv) channel which, when coassembled with KCNB1, modulates the kinetics parameters of the heterotetrameric channel namely the inactivation and deactivation rate. Potassium channel subunit that does not form functional channels by itself. Reduces the deactivation rate. Moderately accelerates activation. This Homo sapiens (Human) protein is Voltage-gated potassium channel regulatory subunit KCNG3.